The following is a 502-amino-acid chain: Probable RNA exonuclease C9B6.11c (502 aa).

A disordered region spans residues 338 to 379 (SELEEKNASTKTENDSNEDDKEECQSSSTSSVPESTASTPKK). Over residues 341–351 (EEKNASTKTEN) the composition is skewed to basic and acidic residues. The span at 363-376 (SSSTSSVPESTAST) shows a compositional bias: low complexity.

It belongs to the CCR4/nocturin family.

The protein resides in the cytoplasm. It is found in the nucleus. The chain is Probable RNA exonuclease C9B6.11c from Schizosaccharomyces pombe (strain 972 / ATCC 24843) (Fission yeast).